An 878-amino-acid polypeptide reads, in one-letter code: Phosphoenolpyruvate carboxylase (878 aa).

Active-site residues include His-140 and Lys-545.

This sequence belongs to the PEPCase type 1 family. Mg(2+) serves as cofactor.

It carries out the reaction oxaloacetate + phosphate = phosphoenolpyruvate + hydrogencarbonate. In terms of biological role, forms oxaloacetate, a four-carbon dicarboxylic acid source for the tricarboxylic acid cycle. This is Phosphoenolpyruvate carboxylase from Pseudomonas paraeruginosa (strain DSM 24068 / PA7) (Pseudomonas aeruginosa (strain PA7)).